The chain runs to 133 residues: Putative actin-depolymerizing factor 11 (133 aa).

The ADF-H domain occupies 1-133 (MVLHDDCKLT…SLDAIRRRIN (133 aa)).

It belongs to the actin-binding proteins ADF family.

The protein localises to the cytoplasm. The protein resides in the cytoskeleton. Actin-depolymerizing protein. Severs actin filaments (F-actin) and binds to actin monomers. The sequence is that of Putative actin-depolymerizing factor 11 (ADF11) from Arabidopsis thaliana (Mouse-ear cress).